The following is a 212-amino-acid chain: Pyridoxine/pyridoxamine 5'-phosphate oxidase (212 aa).

Residues 9–12 and Lys-67 each bind substrate; that span reads RKSY. FMN is bound by residues 62-67, 77-78, Arg-83, and Lys-84; these read RIVLIK and FT. Residues Tyr-124, Arg-128, and Ser-132 each contribute to the substrate site. Residues 141 to 142 and Trp-185 contribute to the FMN site; that span reads QS. A substrate-binding site is contributed by 191 to 193; sequence RLH. Arg-195 lines the FMN pocket.

The protein belongs to the pyridoxamine 5'-phosphate oxidase family. Homodimer. Requires FMN as cofactor.

It carries out the reaction pyridoxamine 5'-phosphate + O2 + H2O = pyridoxal 5'-phosphate + H2O2 + NH4(+). The catalysed reaction is pyridoxine 5'-phosphate + O2 = pyridoxal 5'-phosphate + H2O2. It participates in cofactor metabolism; pyridoxal 5'-phosphate salvage; pyridoxal 5'-phosphate from pyridoxamine 5'-phosphate: step 1/1. Its pathway is cofactor metabolism; pyridoxal 5'-phosphate salvage; pyridoxal 5'-phosphate from pyridoxine 5'-phosphate: step 1/1. Functionally, catalyzes the oxidation of either pyridoxine 5'-phosphate (PNP) or pyridoxamine 5'-phosphate (PMP) into pyridoxal 5'-phosphate (PLP). The protein is Pyridoxine/pyridoxamine 5'-phosphate oxidase of Verminephrobacter eiseniae (strain EF01-2).